Consider the following 93-residue polypeptide: uncharacterized protein (93 aa).

To M.tuberculosis Rv1738.

This is an uncharacterized protein from Mycobacterium tuberculosis (strain CDC 1551 / Oshkosh).